The chain runs to 123 residues: Large ribosomal subunit protein bL19 (123 aa).

Belongs to the bacterial ribosomal protein bL19 family.

Functionally, this protein is located at the 30S-50S ribosomal subunit interface and may play a role in the structure and function of the aminoacyl-tRNA binding site. The chain is Large ribosomal subunit protein bL19 from Ruegeria sp. (strain TM1040) (Silicibacter sp.).